The primary structure comprises 338 residues: Lumican (338 aa).

The signal sequence occupies residues Met1 to Gly18. At Gln19 the chain carries Pyrrolidone carboxylic acid. Tyr20, Tyr21, Tyr23, and Tyr30 each carry sulfotyrosine. The LRRNT domain maps to Phe28–Pro66. LRR repeat units follow at residues Gly67–Asn88, Asp91–Lys114, Gln117–Lys137, Ser138–Val159, Asn160–Lys181, Ser185–Thr205, Ser206–Arg227, and Gly230–Ser250. Asn88 carries N-linked (GlcNAc...) (keratan sulfate) asparagine glycosylation. An N-linked (GlcNAc...) (keratan sulfate) asparagine glycan is attached at Asn127. An N-linked (GlcNAc...) (keratan sulfate) asparagine glycan is attached at Asn160. N-linked (GlcNAc...) (keratan sulfate) asparagine glycosylation occurs at Asn252. 2 LRR repeats span residues Ser255 to Leu276 and Glu277 to Lys296. The cysteines at positions 295 and 328 are disulfide-linked. Ser304 is subject to Phosphoserine. The LRR 11 repeat unit spans residues Lys305–Tyr326.

This sequence belongs to the small leucine-rich proteoglycan (SLRP) family. SLRP class II subfamily. As to quaternary structure, binds to laminin. Post-translationally, contains keratan sulfate. In terms of processing, cys-37, Cys-41, Cys-43 and Cys-53 are involved in disulfide bonds. As to expression, cornea and other tissues.

The protein localises to the secreted. Its subcellular location is the extracellular space. It is found in the extracellular matrix. The chain is Lumican (Lum) from Mus musculus (Mouse).